The sequence spans 1075 residues: Paired amphipathic helix protein pst2 (1075 aa).

3 consecutive PAH domains span residues 28-102 (SPNG…LPSS), 138-208 (LPCT…LPSS), and 243-319 (RPDN…TSLS). A phosphoserine mark is found at Ser-641 and Ser-643. The segment at 647-700 (LTEFVKQPKINGQRESRSAAAARKKEESGNKSQSNSQNSLSDESGNVTPVSKKQ) is disordered. Residues 658 to 675 (GQRESRSAAAARKKEESG) are compositionally biased toward basic and acidic residues. Low complexity predominate over residues 676–691 (NKSQSNSQNSLSDESG).

In terms of assembly, heterotetramer of alp13, clr6, prw1 and pst2.

Its subcellular location is the nucleus. In terms of biological role, has a role in chromatin assembly and chromosome segregation. Involved in the deacetylation of histones. This chain is Paired amphipathic helix protein pst2 (pst2), found in Schizosaccharomyces pombe (strain 972 / ATCC 24843) (Fission yeast).